The sequence spans 214 residues: Pyridoxine/pyridoxamine 5'-phosphate oxidase (214 aa).

Residues 9–12 and Lys67 each bind substrate; that span reads RLDY. Residues 62 to 67, 77 to 78, Lys84, and Gln106 contribute to the FMN site; these read RMVLLK and FT. Substrate-binding residues include Tyr124, Arg128, and Ser132. FMN-binding positions include 141 to 142 and Trp186; that span reads QS. Substrate is bound at residue 192-194; that stretch reads RLH. Residue Arg196 coordinates FMN.

Belongs to the pyridoxamine 5'-phosphate oxidase family. As to quaternary structure, homodimer. The cofactor is FMN.

It catalyses the reaction pyridoxamine 5'-phosphate + O2 + H2O = pyridoxal 5'-phosphate + H2O2 + NH4(+). The catalysed reaction is pyridoxine 5'-phosphate + O2 = pyridoxal 5'-phosphate + H2O2. The protein operates within cofactor metabolism; pyridoxal 5'-phosphate salvage; pyridoxal 5'-phosphate from pyridoxamine 5'-phosphate: step 1/1. It functions in the pathway cofactor metabolism; pyridoxal 5'-phosphate salvage; pyridoxal 5'-phosphate from pyridoxine 5'-phosphate: step 1/1. In terms of biological role, catalyzes the oxidation of either pyridoxine 5'-phosphate (PNP) or pyridoxamine 5'-phosphate (PMP) into pyridoxal 5'-phosphate (PLP). In Microcystis aeruginosa (strain NIES-843 / IAM M-2473), this protein is Pyridoxine/pyridoxamine 5'-phosphate oxidase.